Reading from the N-terminus, the 299-residue chain is Taste receptor type 2 member 45 (299 aa).

Position 1 (M1) is a topological domain, extracellular. The chain crosses the membrane as a helical span at residues 2 to 22 (ITFLPIIFSILVVVTFVIGNF). The Cytoplasmic segment spans residues 23–55 (ANGFIALVNSTEWVKRQKISFADQIVTALAVSR). A helical transmembrane segment spans residues 56 to 76 (VGLLWVLLLNWYSTVLNPAFC). The Extracellular segment spans residues 77-98 (SVELRTTAYNIWAVTGHFSNWP). A helical transmembrane segment spans residues 99–119 (ATSLSIFYLLKIANFSNLIFL). Topologically, residues 120-126 (RLKRRVK) are cytoplasmic. Residues 127-147 (SVILVVLLGPLLFLACHLFVV) traverse the membrane as a helical segment. Residues 148 to 178 (NMNQIVWTKEYEGNMTWKIKLRRAMYLSDTT) are Extracellular-facing. N-linked (GlcNAc...) asparagine glycosylation occurs at N161. A helical transmembrane segment spans residues 179 to 199 (VTMLANLVPFTVTLISFLLLV). The Cytoplasmic portion of the chain corresponds to 200-229 (CSLCKHLKKMQLHGKGSQDPSTKVHIKVLQ). The chain crosses the membrane as a helical span at residues 230–250 (TVISFFLLRAIYFVSVIISVW). Residues 251–259 (SFKNLENKP) are Extracellular-facing. The chain crosses the membrane as a helical span at residues 260–280 (VFMFCQAIGFSCSSAHPFILI). The Cytoplasmic segment spans residues 281–299 (WGNKKLKQTYLSVLWQMRY).

The protein belongs to the G-protein coupled receptor T2R family. Expressed in subsets of taste receptor cells of the tongue and exclusively in gustducin-positive cells.

The protein resides in the membrane. Its function is as follows. Receptor that may play a role in the perception of bitterness and is gustducin-linked. May play a role in sensing the chemical composition of the gastrointestinal content. The activity of this receptor may stimulate alpha gustducin, mediate PLC-beta-2 activation and lead to the gating of TRPM5. This chain is Taste receptor type 2 member 45 (TAS2R45), found in Homo sapiens (Human).